Here is a 432-residue protein sequence, read N- to C-terminus: Glutamyl-tRNA reductase (432 aa).

Residues 50 to 53, Ser-110, 115 to 117, and Gln-121 contribute to the substrate site; these read TCNR and ETQ. The Nucleophile role is filled by Cys-51. An NADP(+)-binding site is contributed by 190–195; sequence GAGEMS.

The protein belongs to the glutamyl-tRNA reductase family. In terms of assembly, homodimer.

The enzyme catalyses (S)-4-amino-5-oxopentanoate + tRNA(Glu) + NADP(+) = L-glutamyl-tRNA(Glu) + NADPH + H(+). It functions in the pathway porphyrin-containing compound metabolism; protoporphyrin-IX biosynthesis; 5-aminolevulinate from L-glutamyl-tRNA(Glu): step 1/2. Functionally, catalyzes the NADPH-dependent reduction of glutamyl-tRNA(Glu) to glutamate 1-semialdehyde (GSA). In Aliarcobacter butzleri (strain RM4018) (Arcobacter butzleri), this protein is Glutamyl-tRNA reductase.